The following is a 207-amino-acid chain: Superoxide dismutase [Mn] (207 aa).

Mn(2+) contacts are provided by His-30, His-78, Asp-166, and His-170.

The protein belongs to the iron/manganese superoxide dismutase family. In terms of assembly, homodimer. It depends on Mn(2+) as a cofactor.

It carries out the reaction 2 superoxide + 2 H(+) = H2O2 + O2. In terms of biological role, destroys superoxide anion radicals which are normally produced within the cells and which are toxic to biological systems. The chain is Superoxide dismutase [Mn] (sodA) from Chlamydia pneumoniae (Chlamydophila pneumoniae).